Here is a 437-residue protein sequence, read N- to C-terminus: Glutamate-1-semialdehyde 2,1-aminomutase (437 aa).

Lys277 is modified (N6-(pyridoxal phosphate)lysine).

This sequence belongs to the class-III pyridoxal-phosphate-dependent aminotransferase family. HemL subfamily. In terms of assembly, homodimer. Pyridoxal 5'-phosphate is required as a cofactor.

Its subcellular location is the cytoplasm. The enzyme catalyses (S)-4-amino-5-oxopentanoate = 5-aminolevulinate. It participates in porphyrin-containing compound metabolism; protoporphyrin-IX biosynthesis; 5-aminolevulinate from L-glutamyl-tRNA(Glu): step 2/2. The protein operates within porphyrin-containing compound metabolism; chlorophyll biosynthesis. The polypeptide is Glutamate-1-semialdehyde 2,1-aminomutase (Thermosynechococcus vestitus (strain NIES-2133 / IAM M-273 / BP-1)).